A 1047-amino-acid chain; its full sequence is Formin-like protein 3 (1047 aa).

Gly-2 carries N-myristoyl glycine lipidation. Residues 22-462 (VPMPDPTELE…AAFQRHNNIE (441 aa)) enclose the GBD/FH3 domain. Residues 520-561 (AVPVEAVAPPPPPPPPPPPPPPAPPLPSEVESIPIPPPPPPP) are disordered. Residues 527 to 546 (APPPPPPPPPPPPPPAPPLP) are compositionally biased toward pro residues. One can recognise an FH2 domain in the interval 580 to 970 (IKKPIKTKFR…MREKLLAQEA (391 aa)). A DAD domain is found at 1000-1037 (DHRPVYEGKDGTIEDIITVLKSVPFTARTAKRGSRFFC).

It belongs to the formin homology family.

It localises to the cytoplasm. It is found in the cell membrane. Its function is as follows. Required for developmental angiogenesis, but not for vasculogenesis. The chain is Formin-like protein 3 (fmnl3) from Danio rerio (Zebrafish).